Consider the following 497-residue polypeptide: Aspartyl/glutamyl-tRNA(Asn/Gln) amidotransferase subunit B (497 aa).

The protein belongs to the GatB/GatE family. GatB subfamily. As to quaternary structure, heterotrimer of A, B and C subunits.

It carries out the reaction L-glutamyl-tRNA(Gln) + L-glutamine + ATP + H2O = L-glutaminyl-tRNA(Gln) + L-glutamate + ADP + phosphate + H(+). It catalyses the reaction L-aspartyl-tRNA(Asn) + L-glutamine + ATP + H2O = L-asparaginyl-tRNA(Asn) + L-glutamate + ADP + phosphate + 2 H(+). Functionally, allows the formation of correctly charged Asn-tRNA(Asn) or Gln-tRNA(Gln) through the transamidation of misacylated Asp-tRNA(Asn) or Glu-tRNA(Gln) in organisms which lack either or both of asparaginyl-tRNA or glutaminyl-tRNA synthetases. The reaction takes place in the presence of glutamine and ATP through an activated phospho-Asp-tRNA(Asn) or phospho-Glu-tRNA(Gln). This is Aspartyl/glutamyl-tRNA(Asn/Gln) amidotransferase subunit B from Nocardioides sp. (strain ATCC BAA-499 / JS614).